The following is an 86-amino-acid chain: Small ribosomal subunit protein uS17 (86 aa).

It belongs to the universal ribosomal protein uS17 family. In terms of assembly, part of the 30S ribosomal subunit.

In terms of biological role, one of the primary rRNA binding proteins, it binds specifically to the 5'-end of 16S ribosomal RNA. The protein is Small ribosomal subunit protein uS17 of Halalkalibacterium halodurans (strain ATCC BAA-125 / DSM 18197 / FERM 7344 / JCM 9153 / C-125) (Bacillus halodurans).